We begin with the raw amino-acid sequence, 189 residues long: uncharacterized protein (189 aa).

The next 3 membrane-spanning stretches (helical) occupy residues 2–22 (LVVVSLTPPVGVCVGLFHHLL), 93–113 (ILFYFYFVLILFYFIALYFIL), and 116–136 (FYSTILFFFPLFIKCSHLHTL).

It is found in the membrane. This is an uncharacterized protein from Schizosaccharomyces pombe (strain 972 / ATCC 24843) (Fission yeast).